A 428-amino-acid chain; its full sequence is Acetyltransferase sirH (428 aa).

The N-linked (GlcNAc...) asparagine glycan is linked to Asn-8. 6 helical membrane passes run 33-53 (LLTP…PGPL), 55-75 (VIVG…HWVS), 78-98 (AFFM…LMFV), 305-325 (LYVG…LIPS), 329-349 (GWGM…EDIL), and 366-386 (FLGY…PVGF).

This sequence belongs to the wax synthase family.

Its subcellular location is the membrane. It participates in polyketide biosynthesis. Acetyltransferase; part of the gene cluster that mediates the biosynthesis of asperlin, a polyketide showing anti-inflammatory, antitumor and antibiotic activities. The first step of the asperlin biosynthesis is the production of the intermediate 2,4,6-octatrienoic acid by the highly redusing polyketide synthase alnA with cleavage of the PKS product by the esterase alnB. 2,4,6-octatrienoic acid is further converted to asperlin via several steps involving the remaining enzymes from the cluster. This Emericella nidulans (strain FGSC A4 / ATCC 38163 / CBS 112.46 / NRRL 194 / M139) (Aspergillus nidulans) protein is Acetyltransferase sirH.